The primary structure comprises 295 residues: Bifunctional protein FolD (295 aa).

Residues 175–177 and isoleucine 243 contribute to the NADP(+) site; that span reads GVS.

The protein belongs to the tetrahydrofolate dehydrogenase/cyclohydrolase family. As to quaternary structure, homodimer.

The enzyme catalyses (6R)-5,10-methylene-5,6,7,8-tetrahydrofolate + NADP(+) = (6R)-5,10-methenyltetrahydrofolate + NADPH. It carries out the reaction (6R)-5,10-methenyltetrahydrofolate + H2O = (6R)-10-formyltetrahydrofolate + H(+). The protein operates within one-carbon metabolism; tetrahydrofolate interconversion. Functionally, catalyzes the oxidation of 5,10-methylenetetrahydrofolate to 5,10-methenyltetrahydrofolate and then the hydrolysis of 5,10-methenyltetrahydrofolate to 10-formyltetrahydrofolate. This chain is Bifunctional protein FolD, found in Xylella fastidiosa (strain 9a5c).